A 460-amino-acid chain; its full sequence is MEMYFKRMKDEWTGLVEQADPPIRAKAAEIAVAHAHYLSIEFYRIVRIDPHAEEFLSNEQVERQLKSAMERWIINVLSAQVDDVERLIQIQHTVAEVHARIGIPVEIVEMGFRVLKKILYPVIFSSDYSAAEKLQVYHFSINSIDIAMEVMTRAFTFSDSSASKEDENYRIFSLLENAEEEKERQIASILSWEIDIIYKILLDSDLGSSLPLSQADFGLWFNHKGRHYFSGIAEVGHISRLIQDFDGIFNQTMRNTRNLNNRSLRVKFLLQIRNTVSQIITLLRELFEEVSRHEVGMDVLTKLLNRRFLPTIFKREIAHANRTGTPLSVLIIDVDKFKEINDTWGHNTGDEILRKVSQAFYDNVRSSDYVFRYGGDEFIIVLTEASENETLRTAERIRSRVEKTKLKAANGEDIALSLSIGAAMFNGHPDYERLIQIADEALYIAKRRGRNRVELWKASL.

H98 is a heme binding site. The GGDEF domain maps to T325 to A458. D333 contacts Mg(2+). The substrate site is built by N341 and D350. D376 is a binding site for Mg(2+). Catalysis depends on D376, which acts as the Proton acceptor.

It depends on heme as a cofactor. Requires Mg(2+) as cofactor.

The catalysed reaction is 2 GTP = 3',3'-c-di-GMP + 2 diphosphate. The protein operates within purine metabolism; 3',5'-cyclic di-GMP biosynthesis. In terms of biological role, globin-coupled heme-based oxygen sensor protein displaying diguanylate cyclase (DGC) activity in response to oxygen availability. Thus, catalyzes the synthesis of cyclic diguanylate (c-di-GMP) via the condensation of 2 GTP molecules. Cyclic-di-GMP is a second messenger which controls cell surface-associated traits in bacteria. The sequence is that of Diguanylate cyclase DosC (dosC) from Escherichia coli O157:H7.